The sequence spans 289 residues: Lipoyl synthase (289 aa).

7 residues coordinate [4Fe-4S] cluster: Cys-33, Cys-38, Cys-44, Cys-59, Cys-63, Cys-66, and Ser-274. The 219-residue stretch at 45 to 263 (FAGGTATFLI…SQGESELGFL (219 aa)) folds into the Radical SAM core domain.

This sequence belongs to the radical SAM superfamily. Lipoyl synthase family. It depends on [4Fe-4S] cluster as a cofactor.

It localises to the cytoplasm. It catalyses the reaction [[Fe-S] cluster scaffold protein carrying a second [4Fe-4S](2+) cluster] + N(6)-octanoyl-L-lysyl-[protein] + 2 oxidized [2Fe-2S]-[ferredoxin] + 2 S-adenosyl-L-methionine + 4 H(+) = [[Fe-S] cluster scaffold protein] + N(6)-[(R)-dihydrolipoyl]-L-lysyl-[protein] + 4 Fe(3+) + 2 hydrogen sulfide + 2 5'-deoxyadenosine + 2 L-methionine + 2 reduced [2Fe-2S]-[ferredoxin]. Its pathway is protein modification; protein lipoylation via endogenous pathway; protein N(6)-(lipoyl)lysine from octanoyl-[acyl-carrier-protein]: step 2/2. Functionally, catalyzes the radical-mediated insertion of two sulfur atoms into the C-6 and C-8 positions of the octanoyl moiety bound to the lipoyl domains of lipoate-dependent enzymes, thereby converting the octanoylated domains into lipoylated derivatives. The protein is Lipoyl synthase of Synechococcus sp. (strain RCC307).